Reading from the N-terminus, the 242-residue chain is Probable transcriptional regulatory protein STH1004 (242 aa).

It belongs to the TACO1 family.

The protein resides in the cytoplasm. This is Probable transcriptional regulatory protein STH1004 from Symbiobacterium thermophilum (strain DSM 24528 / JCM 14929 / IAM 14863 / T).